The following is a 432-amino-acid chain: Cytoplasmic 60S subunit biogenesis factor REH1 (432 aa).

The C2H2-type 1 zinc-finger motif lies at 6–30 (FTCNCCVIQFKTSDLQRYHMKTEWH). The disordered stretch occupies residues 79 to 150 (QSNALPQKQK…NTDYGEDTVS (72 aa)). Basic residues predominate over residues 86–98 (KQKKPIKSKRGRK). The segment covering 105–117 (KRKDRDIAKEKQN) has biased composition (basic and acidic residues). The segment covering 118-143 (RSVSPSGSISSQLSNLTVGTENTNTD) has biased composition (polar residues). 2 consecutive C2H2-type zinc fingers follow at residues 186 to 209 (TECI…FSEH) and 237 to 261 (HNCL…SKRH).

Belongs to the REI1 family. As to quaternary structure, associates with nascent pre-60S particles that have not yet entered the translating pool, and is released from mature 60S subunits. Interacts with pre-60S factors NMD3, LSG1, and TIF6.

The protein resides in the cytoplasm. In terms of biological role, pre-60S-associated cytoplasmic factor involved in the cytoplasmic maturation of the 60S subunit. May act redundantly with REI1 to directly promote a stabilizing structural rearrangement in cytoplasmic 60S subunit maturation independent on the REI1-specific ARX1 recycling. The protein is Cytoplasmic 60S subunit biogenesis factor REH1 (REH1) of Saccharomyces cerevisiae (strain ATCC 204508 / S288c) (Baker's yeast).